A 101-amino-acid polypeptide reads, in one-letter code: Large ribosomal subunit protein bL28 (101 aa).

This sequence belongs to the bacterial ribosomal protein bL28 family.

This chain is Large ribosomal subunit protein bL28, found in Caulobacter sp. (strain K31).